Consider the following 404-residue polypeptide: Multidrug resistance protein MdtG (404 aa).

The next 11 helical transmembrane spans lie at 19-39, 56-76, 90-110, 113-133, 144-164, 171-191, 222-242, 254-274, 288-308, 317-337, and 376-396; these read LGCF…PLYV, LVFS…GGLA, LGMA…QFLI, ALLG…ATQV, TLST…GLLA, PVFF…FFFI, LFVT…ILTL, IAFI…LSAP, ILIV…FVQT, FLLG…LVYN, and AVFC…WNSL.

The protein belongs to the major facilitator superfamily. DHA1 family. MdtG (TC 2.A.1.2.20) subfamily.

The protein resides in the cell inner membrane. This chain is Multidrug resistance protein MdtG, found in Salmonella typhimurium (strain LT2 / SGSC1412 / ATCC 700720).